A 115-amino-acid chain; its full sequence is Large ribosomal subunit protein uL22 (115 aa).

Belongs to the universal ribosomal protein uL22 family. As to quaternary structure, part of the 50S ribosomal subunit.

This protein binds specifically to 23S rRNA; its binding is stimulated by other ribosomal proteins, e.g. L4, L17, and L20. It is important during the early stages of 50S assembly. It makes multiple contacts with different domains of the 23S rRNA in the assembled 50S subunit and ribosome. In terms of biological role, the globular domain of the protein is located near the polypeptide exit tunnel on the outside of the subunit, while an extended beta-hairpin is found that lines the wall of the exit tunnel in the center of the 70S ribosome. In Nitrosospira multiformis (strain ATCC 25196 / NCIMB 11849 / C 71), this protein is Large ribosomal subunit protein uL22.